The sequence spans 293 residues: MRKNRILALFVLSLGLLSFMVTPVSAASKGNLLSPDRILTVAHRGASGYVPEHTILSYETAQKMKADFIELDLQMTKDGKLIVMHDEKLDRTTNGMGWVKDHTLADIKKLDAGSWFNEAYPEKAKPQYVGLKVPTLEEVLDRFGKHANYYIETKSPDTYPGMEEKLIASLQKHKLLGKHSKPGQVIIQSFSKESLVKVHQLQPNLPTVQLLEAKQMASMTDAALEEIKTYAVGAGPDYKALNQENVRMIRSHGLLLHPYTVNNEADMHRLLDWGVTGVFTNYPDLFHKVKKGY.

Positions 1–26 (MRKNRILALFVLSLGLLSFMVTPVSA) are cleaved as a signal peptide. Residues 38–290 (ILTVAHRGAS…NYPDLFHKVK (253 aa)) form the GP-PDE domain. Catalysis depends on H43, which acts as the Proton acceptor. Sn-glycerol 3-phosphate contacts are provided by H43, R44, and E70. The Ca(2+) site is built by E70 and D72. The sn-glycerol 3-phosphate site is built by H85, E152, and Q188. The active-site Proton donor is H85. Residue E152 participates in Ca(2+) binding.

The protein belongs to the glycerophosphoryl diester phosphodiesterase family. It depends on Ca(2+) as a cofactor.

It is found in the secreted. The enzyme catalyses a sn-glycero-3-phosphodiester + H2O = an alcohol + sn-glycerol 3-phosphate + H(+). Its function is as follows. Glycerophosphodiester phosphodiesterase hydrolyzes glycerophosphodiesters into glycerol-3-phosphate (G3P) and the corresponding alcohol. Involved in wall teichoic acid (WTA) metabolism during phosphate starvation. Catalyzes the degradation of WTA, enabling the utilization of WTA as a phosphate reserve under limiting conditions. Is highly selective for the poly(gylcerol phosphate) WTA backbone and catalyzes exolytic cleavage of individual monomer units. In vitro is active toward the WTA oligomer mimics glycerophosphoglycerol (GPG) and bis-glycerophosphoglycerol (bGPG). This is Glycerophosphodiester phosphodiesterase from Bacillus subtilis (strain 168).